The chain runs to 116 residues: Large ribosomal subunit protein bL19 (116 aa).

The protein belongs to the bacterial ribosomal protein bL19 family.

Its function is as follows. This protein is located at the 30S-50S ribosomal subunit interface and may play a role in the structure and function of the aminoacyl-tRNA binding site. The sequence is that of Large ribosomal subunit protein bL19 from Pasteurella multocida (strain Pm70).